Reading from the N-terminus, the 37-residue chain is Large ribosomal subunit protein bL36 (37 aa).

This sequence belongs to the bacterial ribosomal protein bL36 family.

This chain is Large ribosomal subunit protein bL36, found in Gloeobacter violaceus (strain ATCC 29082 / PCC 7421).